The following is a 643-amino-acid chain: Threonine--tRNA ligase (643 aa).

Positions 1-61 (MIKITLKDGS…NEDSSLEICT (61 aa)) constitute a TGS domain. Residues 240–540 (DHNKLGRELG…LIEKYAGALP (301 aa)) form a catalytic region. Residues Cys-335, His-386, and His-517 each contribute to the Zn(2+) site.

This sequence belongs to the class-II aminoacyl-tRNA synthetase family. As to quaternary structure, homodimer. It depends on Zn(2+) as a cofactor.

The protein localises to the cytoplasm. It catalyses the reaction tRNA(Thr) + L-threonine + ATP = L-threonyl-tRNA(Thr) + AMP + diphosphate + H(+). In terms of biological role, catalyzes the attachment of threonine to tRNA(Thr) in a two-step reaction: L-threonine is first activated by ATP to form Thr-AMP and then transferred to the acceptor end of tRNA(Thr). Also edits incorrectly charged L-seryl-tRNA(Thr). In Clostridium perfringens (strain ATCC 13124 / DSM 756 / JCM 1290 / NCIMB 6125 / NCTC 8237 / Type A), this protein is Threonine--tRNA ligase.